The following is a 38-amino-acid chain: uncharacterized protein (38 aa).

This is an uncharacterized protein from Saccharomyces cerevisiae (strain ATCC 204508 / S288c) (Baker's yeast).